Here is a 27-residue protein sequence, read N- to C-terminus: Cupiennin-4b (27 aa).

The residue at position 27 (Gln27) is a Glutamine amide.

In terms of tissue distribution, expressed by the venom gland.

It localises to the secreted. This is Cupiennin-4b from Cupiennius salei (American wandering spider).